The primary structure comprises 189 residues: Peptidyl-tRNA hydrolase (189 aa).

Tyrosine 16 lines the tRNA pocket. The active-site Proton acceptor is histidine 21. Residues phenylalanine 67, asparagine 69, and asparagine 115 each contribute to the tRNA site.

Belongs to the PTH family. As to quaternary structure, monomer.

Its subcellular location is the cytoplasm. The enzyme catalyses an N-acyl-L-alpha-aminoacyl-tRNA + H2O = an N-acyl-L-amino acid + a tRNA + H(+). Its function is as follows. Hydrolyzes ribosome-free peptidyl-tRNAs (with 1 or more amino acids incorporated), which drop off the ribosome during protein synthesis, or as a result of ribosome stalling. Functionally, catalyzes the release of premature peptidyl moieties from peptidyl-tRNA molecules trapped in stalled 50S ribosomal subunits, and thus maintains levels of free tRNAs and 50S ribosomes. The polypeptide is Peptidyl-tRNA hydrolase (Legionella pneumophila (strain Paris)).